A 443-amino-acid polypeptide reads, in one-letter code: Zinc finger protein 713 (443 aa).

The span at 1–10 shows a compositional bias: polar residues; it reads MPSQNAVFSQ. Disordered regions lie at residues 1 to 23 and 99 to 118; these read MPSQ…NDGS and DTHP…TSQN. The KRAB domain occupies 32–102; it reads LTFQDVAVDF…ERDSLLDTHP (71 aa). The segment covering 99–112 has biased composition (basic and acidic residues); the sequence is DTHPDGENRPEIKK. Residues 255-280 form a C2H2-type 1; degenerate zinc finger; sequence HTAEKPSECGKAFSHTSSLSQPQMLL. C2H2-type zinc fingers lie at residues 286-308, 314-336, 342-364, 370-392, and 398-420; these read YKCD…QRIH, FICN…LRIH, YKCN…HRLH, YECG…ERTH, and YKCN…RKIH.

It belongs to the krueppel C2H2-type zinc-finger protein family. Expressed in fetal and adult brain.

The protein resides in the nucleus. Its function is as follows. May be involved in transcriptional regulation. This Homo sapiens (Human) protein is Zinc finger protein 713.